The sequence spans 247 residues: 3-deoxy-manno-octulosonate cytidylyltransferase (247 aa).

This sequence belongs to the KdsB family.

The protein localises to the cytoplasm. It carries out the reaction 3-deoxy-alpha-D-manno-oct-2-ulosonate + CTP = CMP-3-deoxy-beta-D-manno-octulosonate + diphosphate. The protein operates within nucleotide-sugar biosynthesis; CMP-3-deoxy-D-manno-octulosonate biosynthesis; CMP-3-deoxy-D-manno-octulosonate from 3-deoxy-D-manno-octulosonate and CTP: step 1/1. It functions in the pathway bacterial outer membrane biogenesis; lipopolysaccharide biosynthesis. In terms of biological role, activates KDO (a required 8-carbon sugar) for incorporation into bacterial lipopolysaccharide in Gram-negative bacteria. The polypeptide is 3-deoxy-manno-octulosonate cytidylyltransferase (Methylorubrum extorquens (strain PA1) (Methylobacterium extorquens)).